A 395-amino-acid chain; its full sequence is Chalcone synthase 3 (395 aa).

Val2 carries the post-translational modification N-acetylvaline. Cys169 is a catalytic residue.

This sequence belongs to the thiolase-like superfamily. Chalcone/stilbene synthases family.

It carries out the reaction (E)-4-coumaroyl-CoA + 3 malonyl-CoA + 3 H(+) = 2',4,4',6'-tetrahydroxychalcone + 3 CO2 + 4 CoA. Its pathway is secondary metabolite biosynthesis; flavonoid biosynthesis. Functionally, the primary product of this enzyme is 4,2',4',6'-tetrahydroxychalcone (also termed naringenin-chalcone or chalcone) which can under specific conditions spontaneously isomerize into naringenin. In Sinapis alba (White mustard), this protein is Chalcone synthase 3 (CHS3).